The primary structure comprises 275 residues: Adaptin ear-binding coat-associated protein 1 (275 aa).

The disordered stretch occupies residues 166–190; that stretch reads ITTKKGGTSKPKTAGTGGLSLLPPP. A compositionally biased stretch (low complexity) spans 167 to 179; sequence TTKKGGTSKPKTA. Thr211 bears the Phosphothreonine mark. Positions 215 to 275 are disordered; it reads IPKSNHGGSD…APQPSNWVQF (61 aa). Short sequence motifs (WXXF motif) lie at residues 252–255 and 272–275; these read WGDF and WVQF. The segment covering 256-275 has biased composition (polar residues); the sequence is STASSSVPNQAPQPSNWVQF.

This sequence belongs to the NECAP family. As to quaternary structure, interacts with AP1G1 and AP2A1 components of the adapter protein complexes AP-1 and AP-2. Interacts with the GAE domain proteins GGA1, GGA2 and GGA3.

Its subcellular location is the cytoplasmic vesicle. The protein localises to the clathrin-coated vesicle membrane. It is found in the cell membrane. In terms of biological role, involved in endocytosis. This is Adaptin ear-binding coat-associated protein 1 (NECAP1) from Bos taurus (Bovine).